Reading from the N-terminus, the 335-residue chain is Nucleoid-associated protein Pput_1012 (335 aa).

The protein belongs to the YejK family.

The protein localises to the cytoplasm. The protein resides in the nucleoid. In Pseudomonas putida (strain ATCC 700007 / DSM 6899 / JCM 31910 / BCRC 17059 / LMG 24140 / F1), this protein is Nucleoid-associated protein Pput_1012.